Reading from the N-terminus, the 235-residue chain is Eukaryotic translation initiation factor 4E-1 (235 aa).

The segment covering 16–25 has biased composition (basic and acidic residues); that stretch reads VNKHRGVRSD. A disordered region spans residues 16 to 56; that stretch reads VNKHRGVRSDGEEDEQLEEGEIVGGDADTLSSSSSSRPGTA. Acidic residues predominate over residues 26-36; sequence GEEDEQLEEGE. EIF4G-binding regions lie at residues 60–63 and 70–106; these read HPLE and FDTPSAKSKQVAWGSSMRPIYTFSSVEEFWSLYNNIH. MRNA contacts are provided by residues 78–83, lysine 110, and 128–129; these read KQVAWG and WE. Cysteine 133 and cysteine 171 are joined by a disulfide. Residues 154-163 are EIF4G-binding; it reads YTLLAMIGEQ. MRNA contacts are provided by residues 178 to 183 and 223 to 227; these read RARQEK and KTLDR.

The protein belongs to the eukaryotic initiation factor 4E family. As to quaternary structure, EIF4F is a multi-subunit complex, the composition of which varies with external and internal environmental conditions. It is composed of at least EIF4A, EIF4E and EIF4G. EIF4E is also known to interact with other partners. In higher plants two isoforms of EIF4F have been identified, named isoform EIF4F and isoform EIF(iso)4F. Isoform EIF4F has subunits p220 and p26, whereas isoform EIF(iso)4F has subunits p82 and p28. (Microbial infection) Interacts with potyvirus viral genome-linked protein (VPg); this interaction is possible in susceptible hosts but impaired in resistant plants. In terms of processing, according to the redox status, the Cys-133-Cys-171 disulfide bridge may have a role in regulating protein function by affecting its ability to bind capped mRNA.

It localises to the nucleus. The protein resides in the cytoplasm. Its function is as follows. Component of the protein complex eIF4F, which is involved in the recognition of the mRNA cap, ATP-dependent unwinding of 5'-terminal secondary structure and recruitment of mRNA to the ribosome. Recognizes and binds the 7-methylguanosine-containing mRNA cap during an early step in the initiation of protein synthesis and facilitates ribosome binding by inducing the unwinding of the mRNAs secondary structures. Key component of recessive resistance to potyviruses. Functionally, (Microbial infection) Susceptibility host factor required for viral infection by recruiting viral RNAs to the host ribosomal complex via an interaction with viral genome-linked protein (VPg). In Lactuca sativa (Garden lettuce), this protein is Eukaryotic translation initiation factor 4E-1.